The following is a 225-amino-acid chain: Large ribosomal subunit protein bL25 (225 aa).

The interval 206–225 (EDSKNKITKDNETNKDKSNL) is disordered.

The protein belongs to the bacterial ribosomal protein bL25 family. CTC subfamily. In terms of assembly, part of the 50S ribosomal subunit; part of the 5S rRNA/L5/L18/L25 subcomplex. Contacts the 5S rRNA. Binds to the 5S rRNA independently of L5 and L18.

This is one of the proteins that binds to the 5S RNA in the ribosome where it forms part of the central protuberance. This Vesicomyosocius okutanii subsp. Calyptogena okutanii (strain HA) protein is Large ribosomal subunit protein bL25.